A 430-amino-acid polypeptide reads, in one-letter code: Lipoyl synthase, mitochondrial (430 aa).

The transit peptide at 1–29 (MASPVPIQRLQAPLRRSLARAAALSTRSY) directs the protein to the mitochondrion. Residues 28–58 (SYATIPSGPSSQPTSQESSSAASASAPATKP) show a composition bias toward low complexity. The interval 28–62 (SYATIPSGPSSQPTSQESSSAASASAPATKPRPTY) is disordered. [4Fe-4S] cluster contacts are provided by C142, C147, C153, C173, C177, C180, and S390. The Radical SAM core domain maps to 156 to 379 (GSNKAAATAT…RQRALDMGFL (224 aa)).

The protein belongs to the radical SAM superfamily. Lipoyl synthase family. The cofactor is [4Fe-4S] cluster.

It is found in the mitochondrion. The catalysed reaction is [[Fe-S] cluster scaffold protein carrying a second [4Fe-4S](2+) cluster] + N(6)-octanoyl-L-lysyl-[protein] + 2 oxidized [2Fe-2S]-[ferredoxin] + 2 S-adenosyl-L-methionine + 4 H(+) = [[Fe-S] cluster scaffold protein] + N(6)-[(R)-dihydrolipoyl]-L-lysyl-[protein] + 4 Fe(3+) + 2 hydrogen sulfide + 2 5'-deoxyadenosine + 2 L-methionine + 2 reduced [2Fe-2S]-[ferredoxin]. Its pathway is protein modification; protein lipoylation via endogenous pathway; protein N(6)-(lipoyl)lysine from octanoyl-[acyl-carrier-protein]: step 2/2. Its function is as follows. Catalyzes the radical-mediated insertion of two sulfur atoms into the C-6 and C-8 positions of the octanoyl moiety bound to the lipoyl domains of lipoate-dependent enzymes, thereby converting the octanoylated domains into lipoylated derivatives. The chain is Lipoyl synthase, mitochondrial from Neurospora crassa (strain ATCC 24698 / 74-OR23-1A / CBS 708.71 / DSM 1257 / FGSC 987).